A 509-amino-acid chain; its full sequence is MDTYSGQNGWADTSNASPWGDTNDTMPIDNSLSNSLSGLQLNEDINTVRANLTESIWGTERTGAPNNVETGLEAKDSLNVSTNFNELNTAILSPTSSTSNIEEQNSFTESLESWINEVRKTYNPQQLDIISIEEIPEREGLLFKHANYSVKHLIDLPNTEPPKNRTVVRRYSDFLWLQEVLLKRYPFRMIPDLPPKKIGSQNLDPVFLNKRRIGLSKFINLVMKHPKLSKDDLVLTFLTVPTDLTSWRKQVSYDTADEFTDKRISKDFVKIWKKDLAEIWNNTANCIDELIDKWTKISILVDRHEKRLQIIANERKIMNDLIHDVGNLTKSVYPIDQNPTILDINSGMTVISKHIEKTNENYNQQALDTKQKVLPKFRMYTDILRALKNVFERYKMLATNNVSMLQKHIDLNLQKLEDMKGKPDASGQEYDRIKTTIRKDRKIMYEQSNRAWLIRECILEEFTIFQETQFMITGCFQEWAKVQSTYSSLNLNEWENVTNHILEMPLSRE.

Over residues 1 to 25 (MDTYSGQNGWADTSNASPWGDTNDT) the composition is skewed to polar residues. A disordered region spans residues 1 to 28 (MDTYSGQNGWADTSNASPWGDTNDTMPI). A PX domain is found at 126–245 (QLDIISIEEI…TFLTVPTDLT (120 aa)). The a 1,2-diacyl-sn-glycero-3-phospho-(1D-myo-inositol-3-phosphate) site is built by Arg-170, Ser-172, Lys-196, and Arg-211.

Belongs to the sorting nexin family.

It localises to the cytoplasm. It is found in the membrane. Its function is as follows. Required for vacuolar protein sorting. The chain is Sorting nexin MVP1 (MVP1) from Candida glabrata (strain ATCC 2001 / BCRC 20586 / JCM 3761 / NBRC 0622 / NRRL Y-65 / CBS 138) (Yeast).